Reading from the N-terminus, the 95-residue chain is Integration host factor subunit beta (95 aa).

It belongs to the bacterial histone-like protein family. Heterodimer of an alpha and a beta chain.

This protein is one of the two subunits of integration host factor, a specific DNA-binding protein that functions in genetic recombination as well as in transcriptional and translational control. This is Integration host factor subunit beta from Jannaschia sp. (strain CCS1).